A 288-amino-acid chain; its full sequence is Quinate/shikimate dehydrogenase (288 aa).

Positions 71 and 107 each coordinate substrate. NAD(+)-binding positions include alanine 132 to alanine 135, asparagine 155 to aspartate 158, lysine 205, cysteine 232 to asparagine 235, and glycine 255.

It belongs to the shikimate dehydrogenase family. In terms of assembly, homodimer.

The catalysed reaction is L-quinate + NAD(+) = 3-dehydroquinate + NADH + H(+). It carries out the reaction L-quinate + NADP(+) = 3-dehydroquinate + NADPH + H(+). It catalyses the reaction shikimate + NADP(+) = 3-dehydroshikimate + NADPH + H(+). The enzyme catalyses shikimate + NAD(+) = 3-dehydroshikimate + NADH + H(+). Its pathway is metabolic intermediate biosynthesis; chorismate biosynthesis; chorismate from D-erythrose 4-phosphate and phosphoenolpyruvate: step 4/7. Its function is as follows. The actual biological function of YdiB remains unclear, nor is it known whether 3-dehydroshikimate or quinate represents the natural substrate. Catalyzes the reversible NAD-dependent reduction of both 3-dehydroshikimate (DHSA) and 3-dehydroquinate to yield shikimate (SA) and quinate, respectively. It can use both NAD or NADP for catalysis, however it has higher catalytic efficiency with NAD. This Escherichia coli (strain SMS-3-5 / SECEC) protein is Quinate/shikimate dehydrogenase.